We begin with the raw amino-acid sequence, 258 residues long: Type III pantothenate kinase (258 aa).

6-13 (DVGNTNTV) serves as a coordination point for ATP. Residues tyrosine 100 and 107–110 (GADR) each bind substrate. Catalysis depends on aspartate 109, which acts as the Proton acceptor. K(+) is bound at residue aspartate 129. Threonine 132 is a binding site for ATP. Threonine 184 lines the substrate pocket.

It belongs to the type III pantothenate kinase family. Homodimer. Requires NH4(+) as cofactor. K(+) is required as a cofactor.

Its subcellular location is the cytoplasm. The catalysed reaction is (R)-pantothenate + ATP = (R)-4'-phosphopantothenate + ADP + H(+). Its pathway is cofactor biosynthesis; coenzyme A biosynthesis; CoA from (R)-pantothenate: step 1/5. Functionally, catalyzes the phosphorylation of pantothenate (Pan), the first step in CoA biosynthesis. The chain is Type III pantothenate kinase from Geobacillus sp. (strain WCH70).